The chain runs to 159 residues: Putative ribosomal RNA large subunit methyltransferase H (159 aa).

Residues Leu76, Gly108, and Phe127 to Phe132 contribute to the S-adenosyl-L-methionine site.

This sequence belongs to the RNA methyltransferase RlmH family.

It is found in the cytoplasm. It carries out the reaction pseudouridine(1915) in 23S rRNA + S-adenosyl-L-methionine = N(3)-methylpseudouridine(1915) in 23S rRNA + S-adenosyl-L-homocysteine + H(+). Functionally, specifically methylates the pseudouridine at position 1915 (m3Psi1915) in 23S rRNA. This chain is Putative ribosomal RNA large subunit methyltransferase H, found in Methanococcus maripaludis (strain C7 / ATCC BAA-1331).